A 461-amino-acid chain; its full sequence is Regulatory protein AtoC (461 aa).

Residues 6–120 form the Response regulatory domain; it reads RILIVDDEDN…ELNLIVQRAL (115 aa). Asp-55 carries the post-translational modification 4-aspartylphosphate. Residue His-73 is modified to Phosphohistidine. Positions 145-374 constitute a Sigma-54 factor interaction domain; it reads ILTNSPAMMD…LSNVIERAVV (230 aa). ATP-binding positions include 173–180 and 236–245; these read GESGTGKE and ANEGTLLLDE. The segment at residues 433–452 is a DNA-binding region (H-T-H motif); sequence RTRTALMLGISRRALMYKLQ.

In terms of processing, phosphorylated by AtoS. Contains two phosphorylation sites, which are both involved in the transduction of the acetoacetate signal. Asp-55 is probably the primary phosphorylation site, but either both residues can be phosphorylated independently by AtoS or the phosphate group can be transferred between them. Post-translationally, the N-terminus is blocked.

The protein resides in the cytoplasm. In terms of biological role, member of the two-component regulatory system AtoS/AtoC. In the presence of acetoacetate, AtoS/AtoC stimulates the expression of the atoDAEB operon, leading to short chain fatty acid catabolism and activation of the poly-(R)-3-hydroxybutyrate (cPHB) biosynthetic pathway. Also induces the operon in response to spermidine. Involved in the regulation of motility and chemotaxis, via transcriptional induction of the flagellar regulon. AtoC acts by binding directly to the promoter region of the target genes. In addition to its role as a transcriptional regulator, functions as a post-translational regulator that inhibits polyamine biosynthesis via regulation of ornithine decarboxylase (ODC). The polypeptide is Regulatory protein AtoC (atoC) (Escherichia coli (strain K12)).